The primary structure comprises 246 residues: 2-deoxyglucose-6-phosphate phosphatase 2 (246 aa).

D83 serves as the catalytic Nucleophile. Residue D83 coordinates Mg(2+). Substrate contacts are provided by residues D83, E92, and 146-149 (DVKN). Residue D183 coordinates Mg(2+).

The protein belongs to the HAD-like hydrolase superfamily. DOG/GPP family. It depends on Mg(2+) as a cofactor.

The catalysed reaction is 2-deoxy-D-glucose 6-phosphate + H2O = 2-deoxy-D-glucose + phosphate. In terms of biological role, phosphatase that is active on 2-deoxy-D-glucose 6-phosphate (2-DOG-6P), but not very active on fructose-1-P. The polypeptide is 2-deoxyglucose-6-phosphate phosphatase 2 (Saccharomyces cerevisiae (strain ATCC 204508 / S288c) (Baker's yeast)).